A 36-amino-acid chain; its full sequence is Photosystem I reaction center subunit VIII (36 aa).

The chain crosses the membrane as a helical span at residues 10 to 30 (FVPLVGLVFSAIIMVLSFLYI).

It belongs to the PsaI family.

Its subcellular location is the plastid. It localises to the chloroplast thylakoid membrane. Functionally, may help in the organization of the PsaL subunit. This chain is Photosystem I reaction center subunit VIII, found in Welwitschia mirabilis (Tree tumbo).